The following is a 116-amino-acid chain: Probable early E4 11 kDa protein (116 aa).

This Human adenovirus A serotype 12 (HAdV-12) protein is Probable early E4 11 kDa protein.